We begin with the raw amino-acid sequence, 49 residues long: Small ribosomal subunit protein eS31 (49 aa).

Zn(2+) contacts are provided by cysteine 21, cysteine 24, cysteine 39, and cysteine 42. Residues 21–42 (CPRCGPGVFLADHKNRLACGKC) form a C4-type zinc finger.

Belongs to the eukaryotic ribosomal protein eS31 family. In terms of assembly, part of the 30S ribosomal subunit. Zn(2+) serves as cofactor.

This is Small ribosomal subunit protein eS31 from Methanosarcina mazei (strain ATCC BAA-159 / DSM 3647 / Goe1 / Go1 / JCM 11833 / OCM 88) (Methanosarcina frisia).